The primary structure comprises 260 residues: Large ribosomal subunit protein uL2 (260 aa).

The tract at residues 208 to 230 (EHPHGGGNHQHIGHPSTVRRDAS) is disordered.

It belongs to the universal ribosomal protein uL2 family.

It localises to the cytoplasm. The protein is Large ribosomal subunit protein uL2 of Caenorhabditis elegans.